A 371-amino-acid chain; its full sequence is Queuine tRNA-ribosyltransferase (371 aa).

The active-site Proton acceptor is the Asp-93. Substrate contacts are provided by residues 93–97 (DSGGF), Asp-147, Gln-191, and Gly-218. Residues 249–255 (GVGTPLD) form an RNA binding region. Asp-268 serves as the catalytic Nucleophile. The tract at residues 273-277 (TRNAR) is RNA binding; important for wobble base 34 recognition. 4 residues coordinate Zn(2+): Cys-306, Cys-308, Cys-311, and His-337.

The protein belongs to the queuine tRNA-ribosyltransferase family. In terms of assembly, homodimer. Within each dimer, one monomer is responsible for RNA recognition and catalysis, while the other monomer binds to the replacement base PreQ1. Zn(2+) is required as a cofactor.

The enzyme catalyses 7-aminomethyl-7-carbaguanine + guanosine(34) in tRNA = 7-aminomethyl-7-carbaguanosine(34) in tRNA + guanine. Its pathway is tRNA modification; tRNA-queuosine biosynthesis. Functionally, catalyzes the base-exchange of a guanine (G) residue with the queuine precursor 7-aminomethyl-7-deazaguanine (PreQ1) at position 34 (anticodon wobble position) in tRNAs with GU(N) anticodons (tRNA-Asp, -Asn, -His and -Tyr). Catalysis occurs through a double-displacement mechanism. The nucleophile active site attacks the C1' of nucleotide 34 to detach the guanine base from the RNA, forming a covalent enzyme-RNA intermediate. The proton acceptor active site deprotonates the incoming PreQ1, allowing a nucleophilic attack on the C1' of the ribose to form the product. After dissociation, two additional enzymatic reactions on the tRNA convert PreQ1 to queuine (Q), resulting in the hypermodified nucleoside queuosine (7-(((4,5-cis-dihydroxy-2-cyclopenten-1-yl)amino)methyl)-7-deazaguanosine). In Lawsonia intracellularis (strain PHE/MN1-00), this protein is Queuine tRNA-ribosyltransferase.